Consider the following 435-residue polypeptide: 3-phosphoshikimate 1-carboxyvinyltransferase (435 aa).

The 3-phosphoshikimate site is built by Lys15, Ser16, and Arg20. Lys15 lines the phosphoenolpyruvate pocket. Phosphoenolpyruvate contacts are provided by Gly96 and Arg124. The 3-phosphoshikimate site is built by Ser169, Gln171, Ser195, Asp318, and Lys345. Position 171 (Gln171) interacts with phosphoenolpyruvate. The Proton acceptor role is filled by Asp318. 2 residues coordinate phosphoenolpyruvate: Arg349 and Arg393.

It belongs to the EPSP synthase family. Monomer.

The protein resides in the cytoplasm. It catalyses the reaction 3-phosphoshikimate + phosphoenolpyruvate = 5-O-(1-carboxyvinyl)-3-phosphoshikimate + phosphate. Its pathway is metabolic intermediate biosynthesis; chorismate biosynthesis; chorismate from D-erythrose 4-phosphate and phosphoenolpyruvate: step 6/7. Functionally, catalyzes the transfer of the enolpyruvyl moiety of phosphoenolpyruvate (PEP) to the 5-hydroxyl of shikimate-3-phosphate (S3P) to produce enolpyruvyl shikimate-3-phosphate and inorganic phosphate. This is 3-phosphoshikimate 1-carboxyvinyltransferase from Chlorobium chlorochromatii (strain CaD3).